Here is a 625-residue protein sequence, read N- to C-terminus: Arginine--tRNA ligase (625 aa).

Positions 128 to 138 (VNPTKPLHMGH) match the 'HIGH' region motif.

It belongs to the class-I aminoacyl-tRNA synthetase family.

The protein resides in the cytoplasm. It catalyses the reaction tRNA(Arg) + L-arginine + ATP = L-arginyl-tRNA(Arg) + AMP + diphosphate. The chain is Arginine--tRNA ligase (argS) from Pyrococcus abyssi (strain GE5 / Orsay).